The primary structure comprises 350 residues: Biotin synthase (350 aa).

One can recognise a Radical SAM core domain in the interval 38-256 (NHVQVSTLLS…IAVARIMMPK (219 aa)). Residues Cys-53, Cys-57, and Cys-60 each coordinate [4Fe-4S] cluster. [2Fe-2S] cluster-binding residues include Cys-97, Cys-128, Cys-188, and Arg-260.

This sequence belongs to the radical SAM superfamily. Biotin synthase family. Homodimer. The cofactor is [4Fe-4S] cluster. [2Fe-2S] cluster serves as cofactor.

The enzyme catalyses (4R,5S)-dethiobiotin + (sulfur carrier)-SH + 2 reduced [2Fe-2S]-[ferredoxin] + 2 S-adenosyl-L-methionine = (sulfur carrier)-H + biotin + 2 5'-deoxyadenosine + 2 L-methionine + 2 oxidized [2Fe-2S]-[ferredoxin]. It participates in cofactor biosynthesis; biotin biosynthesis; biotin from 7,8-diaminononanoate: step 2/2. Functionally, catalyzes the conversion of dethiobiotin (DTB) to biotin by the insertion of a sulfur atom into dethiobiotin via a radical-based mechanism. The chain is Biotin synthase from Vibrio cholerae serotype O1 (strain ATCC 39541 / Classical Ogawa 395 / O395).